The primary structure comprises 1230 residues: Ubiquitin carboxyl-terminal hydrolase 15 (1230 aa).

The 141-residue stretch at 39 to 179 (EDSFTWNIPD…EGTLNITAYV (141 aa)) folds into the MATH domain. Residues 205–536 (VGFRNQGATC…SAYMLVYIRQ (332 aa)) form the USP domain. The active-site Nucleophile is the Cys214. The active-site Proton acceptor is the His465.

It belongs to the peptidase C19 family. Interacts with PEX6; promoting association with the PEX1-PEX6 ATPase complex.

The protein localises to the cytoplasm. The protein resides in the cytosol. Its subcellular location is the peroxisome. The enzyme catalyses Thiol-dependent hydrolysis of ester, thioester, amide, peptide and isopeptide bonds formed by the C-terminal Gly of ubiquitin (a 76-residue protein attached to proteins as an intracellular targeting signal).. In terms of biological role, deubiquitinase involved in peroxisome import by mediating deubiquitination of the peroxisomal import receptor PEX5. Catalyzes deubiquitination of both monoubiquitiated and polyubiquitinated forms of PEX5 following its retrotranslocation into the cytosol, resetting PEX5 for a subsequent import cycle. This chain is Ubiquitin carboxyl-terminal hydrolase 15, found in Saccharomyces cerevisiae (strain ATCC 204508 / S288c) (Baker's yeast).